We begin with the raw amino-acid sequence, 467 residues long: Putative pentatricopeptide repeat-containing protein At1g10330 (467 aa).

PPR repeat units follow at residues 50–84, 85–119, 120–150, 151–181, 182–216, 220–256, 257–287, 288–322, 323–358, and 359–389; these read TKCV…HVQP, NNLT…GFLW, DPFV…ILNP, CVVA…MPVT, DVVS…ERAV, NEAT…EIIL, TTTL…IRDK, KVCA…YVHP, NGIT…KIIP, and TSEH…LPFE. The type E motif; degenerate stretch occupies residues 394-467; sequence VLGALLGACK…RKIPAYSVLT (74 aa).

It belongs to the PPR family. PCMP-E subfamily.

The protein is Putative pentatricopeptide repeat-containing protein At1g10330 (PCMP-E71) of Arabidopsis thaliana (Mouse-ear cress).